The chain runs to 113 residues: Beta-microseminoprotein A1 (113 aa).

Residues 1–20 form the signal peptide; the sequence is MNVLLGGLVIFATFVTLCNG. 5 cysteine pairs are disulfide-bonded: cysteine 22–cysteine 70, cysteine 38–cysteine 62, cysteine 57–cysteine 93, cysteine 60–cysteine 69, and cysteine 84–cysteine 107.

The protein belongs to the beta-microseminoprotein family.

It localises to the secreted. The chain is Beta-microseminoprotein A1 (MSPA) from Saguinus oedipus (Cotton-top tamarin).